Reading from the N-terminus, the 38-residue chain is Glutathione S-transferase 2 (38 aa).

Belongs to the GST superfamily. Phi family.

It catalyses the reaction RX + glutathione = an S-substituted glutathione + a halide anion + H(+). In terms of biological role, conjugation of reduced glutathione to a wide number of exogenous and endogenous hydrophobic electrophiles. In plants, may have a detoxification role against certain herbicides. This Populus euphratica (Euphrates poplar) protein is Glutathione S-transferase 2.